Here is a 386-residue protein sequence, read N- to C-terminus: 8-amino-7-oxononanoate synthase (386 aa).

Arginine 23 is a substrate binding site. 110 to 111 is a binding site for pyridoxal 5'-phosphate; sequence GY. Histidine 135 contributes to the substrate binding site. Residues serine 181, histidine 209, and threonine 236 each contribute to the pyridoxal 5'-phosphate site. Lysine 239 is modified (N6-(pyridoxal phosphate)lysine). Threonine 354 is a substrate binding site.

It belongs to the class-II pyridoxal-phosphate-dependent aminotransferase family. BioF subfamily. In terms of assembly, homodimer. The cofactor is pyridoxal 5'-phosphate.

It carries out the reaction 6-carboxyhexanoyl-[ACP] + L-alanine + H(+) = (8S)-8-amino-7-oxononanoate + holo-[ACP] + CO2. It participates in cofactor biosynthesis; biotin biosynthesis. Catalyzes the decarboxylative condensation of pimeloyl-[acyl-carrier protein] and L-alanine to produce 8-amino-7-oxononanoate (AON), [acyl-carrier protein], and carbon dioxide. The polypeptide is 8-amino-7-oxononanoate synthase (Thiobacillus denitrificans (strain ATCC 25259 / T1)).